Reading from the N-terminus, the 207-residue chain is Large ribosomal subunit protein uL4 (207 aa).

The segment at 58 to 85 is disordered; that stretch reads AGSGKKPFKQKGTGQARQGCRRAPQYPG.

This sequence belongs to the universal ribosomal protein uL4 family. In terms of assembly, part of the 50S ribosomal subunit.

In terms of biological role, one of the primary rRNA binding proteins, this protein initially binds near the 5'-end of the 23S rRNA. It is important during the early stages of 50S assembly. It makes multiple contacts with different domains of the 23S rRNA in the assembled 50S subunit and ribosome. Its function is as follows. Forms part of the polypeptide exit tunnel. The protein is Large ribosomal subunit protein uL4 of Geotalea uraniireducens (strain Rf4) (Geobacter uraniireducens).